Reading from the N-terminus, the 1038-residue chain is MDLNGDSNAKRKRSSISAAAERPAKHLRPENSSLTPGDTTPANGTVYDVEDDAESSHLIPIAAAPADSPEWQATIEEVVKSVVSIHFCQTCSFDTELSMSSQATGFVVDAERGYILTNRHVVCPGPFWGYVIFDNHEECDVRPVYRDPVHDFGILKFDPKAIRYLKLTELKLQPDAARVGSEIRVVGNDAGEKLSILSGVISRLDRNAPEYGEGYSDFNTNYIQAAAAASGGSSGSPVVNIDGHAIALQAGGRADGAATDYFLPLDRPLRALNCIRRGEPVTRGTIQTQWILKPFDECRRLGLTPEWEAKVRKAAPTETSMLVAEIILPEGPADGKLEEGDVLLQVNGELLTQFIRLDDILDSSVGKTVRLLVQRGGQNVELECEVGDLHAITPDRFVTVAGGTFHDLSYQQARLYAIATRGVYVCEAAGSFKLENTLSGWLIDSVDKRPTRNLEEFVEVMKSIPDRSRVVISYRHIRDLHTRGTSIVYIDRHWHPKMRLAVRNDETGLWDFSDLADPIPALPPVPRKANFIQLDGVSQPAAAEIVRSFVRVSCTMPLKLDGYPQAKKTGFGLVIDAEKGLVVVSRAIVPYDLCDINVTVADSIIVSAKVVFLHPLQNYTIVQYDPSLVQAPVQSARLSTEYIKQGQSTIFVGFNQNFRIVVAKTAVTDITTVSIPANASAPRYRAINLDAITVDTGLSGQCSNGVLVGEDGVVQALWLNYLGERTPSSHKDVEYHLGFATPALLPVASKVQAGEMPKLRILNMESYVVQMSQARIMGVSEEWIQRVTQANPSRHQLFMVRKVDCPPAGFSTTAHDSFQEGDIILTLDGQLITRVSELDIMYDKDVLEALIVRNGQEMKIQVPTVPTEDLETDRAVVFCGAVLQKPHHAVRQQISKLHSEVYVSARSRGSPAYQYGLSPTNFITAVNGVPTPNLDTFVQEVSKIPDNTYFRLRAVTFDNVPWVVTMKKNDHYFPMSEYIKDPAHPAGWKTVSHDKAKHKDGIAPDAANLNPDAMDEGFDDVSELEPEVRLEVGHWTVR.

A disordered region spans residues 1 to 47 (MDLNGDSNAKRKRSSISAAAERPAKHLRPENSSLTPGDTTPANGTVY). Positions 30–43 (ENSSLTPGDTTPAN) are enriched in polar residues. The interval 82-275 (VVSIHFCQTC…DRPLRALNCI (194 aa)) is serine protease. Residues His-120, Asp-151, and Ser-233 each act as charge relay system in the active site. PDZ domains lie at 289-374 (QWIL…LLVQ) and 877-958 (VFCG…VTFD).

It belongs to the peptidase S1C family.

Its subcellular location is the nucleus. Its function is as follows. Nuclear serine protease which mediates apoptosis. The sequence is that of Pro-apoptotic serine protease nma111 (nma111) from Aspergillus terreus (strain NIH 2624 / FGSC A1156).